Here is a 471-residue protein sequence, read N- to C-terminus: MKIKTRFAPSPTGYLHVGGARTALYSWLFARHHGGEFVLRIEDTDLERSTPEAIEAIMDGMNWLNLEWDEGPYFQTKRFDRYNAVIDEMLEAGTAYKCYCSKERLDQLREEQMAKGEKPRYDGRCRHSHEHHADDEPCVVRFANPQDGSVIFDDQIRGPIEFSNQELDDLIIRRTDGSPTYNFCVVVDDWDMEITHVIRGEDHINNTPRQINILKALNAPVPMYAHVSMINGDDGKKLSKRHGAVSVMQYRDDGYLPEALLNYLVRLGWSNGDQEIFTREEMINLFSLGAVSKSSSAFNTDKLLWLNHHYINTLAPEYVATHLQWHIEQENIDTRNGPQLAELVKLLGERCKTLKEMAQSCRYFYEDFSEFDADAAKKHLRPVARQPLEVVRDKLSAITDWSAENVHHAIQSTAEELEVGMGKVGMPLRVAVTGAGQSPALDVTVHAIGKTRSIERINKALGFIAERESQQ.

A 'HIGH' region motif is present at residues 9-19; it reads PSPTGYLHVGG. The Zn(2+) site is built by Cys98, Cys100, Cys125, and His127. The 'KMSKS' region signature appears at 237 to 241; it reads KLSKR. Lys240 contributes to the ATP binding site.

It belongs to the class-I aminoacyl-tRNA synthetase family. Glutamate--tRNA ligase type 1 subfamily. Monomer. Requires Zn(2+) as cofactor.

The protein resides in the cytoplasm. It carries out the reaction tRNA(Glu) + L-glutamate + ATP = L-glutamyl-tRNA(Glu) + AMP + diphosphate. In terms of biological role, catalyzes the attachment of glutamate to tRNA(Glu) in a two-step reaction: glutamate is first activated by ATP to form Glu-AMP and then transferred to the acceptor end of tRNA(Glu). In Salmonella arizonae (strain ATCC BAA-731 / CDC346-86 / RSK2980), this protein is Glutamate--tRNA ligase.